Consider the following 56-residue polypeptide: Ferredoxin (56 aa).

4Fe-4S ferredoxin-type domains follow at residues A2 to D28 and T29 to E56. Positions 9, 12, 15, 19, 38, 41, 44, and 48 each coordinate [4Fe-4S] cluster.

[4Fe-4S] cluster is required as a cofactor.

Its function is as follows. Ferredoxins are iron-sulfur proteins that transfer electrons in a wide variety of metabolic reactions. This is Ferredoxin (fer) from Clostridium perfringens (strain 13 / Type A).